A 272-amino-acid polypeptide reads, in one-letter code: Phosphatidylglycerol--prolipoprotein diacylglyceryl transferase (272 aa).

The next 4 helical transmembrane spans lie at 21 to 41 (IAVH…IFVA), 60 to 80 (YIWW…VLFY), 101 to 121 (GVYA…FIIA), and 131 to 151 (VSFW…YIFG). R152 is a binding site for a 1,2-diacyl-sn-glycero-3-phospho-(1'-sn-glycerol). Helical transmembrane passes span 181–201 (PSQI…LAFY), 209–229 (GQLA…AEFF), and 244–264 (LTMG…FYVV).

It belongs to the Lgt family.

The protein localises to the cell inner membrane. It carries out the reaction L-cysteinyl-[prolipoprotein] + a 1,2-diacyl-sn-glycero-3-phospho-(1'-sn-glycerol) = an S-1,2-diacyl-sn-glyceryl-L-cysteinyl-[prolipoprotein] + sn-glycerol 1-phosphate + H(+). It functions in the pathway protein modification; lipoprotein biosynthesis (diacylglyceryl transfer). Catalyzes the transfer of the diacylglyceryl group from phosphatidylglycerol to the sulfhydryl group of the N-terminal cysteine of a prolipoprotein, the first step in the formation of mature lipoproteins. This chain is Phosphatidylglycerol--prolipoprotein diacylglyceryl transferase, found in Aliarcobacter butzleri (strain RM4018) (Arcobacter butzleri).